The following is a 311-amino-acid chain: 4-hydroxy-3-methylbut-2-enyl diphosphate reductase (311 aa).

Cys-12 is a [4Fe-4S] cluster binding site. (2E)-4-hydroxy-3-methylbut-2-enyl diphosphate-binding residues include His-43 and His-81. His-43 and His-81 together coordinate dimethylallyl diphosphate. Isopentenyl diphosphate contacts are provided by His-43 and His-81. Residue Cys-103 coordinates [4Fe-4S] cluster. A (2E)-4-hydroxy-3-methylbut-2-enyl diphosphate-binding site is contributed by His-131. Residue His-131 coordinates dimethylallyl diphosphate. His-131 is an isopentenyl diphosphate binding site. Catalysis depends on Glu-133, which acts as the Proton donor. Thr-170 is a binding site for (2E)-4-hydroxy-3-methylbut-2-enyl diphosphate. Residue Cys-198 participates in [4Fe-4S] cluster binding. (2E)-4-hydroxy-3-methylbut-2-enyl diphosphate-binding residues include Ser-226, Asn-228, and Ser-271. The dimethylallyl diphosphate site is built by Ser-226, Asn-228, and Ser-271. The isopentenyl diphosphate site is built by Ser-226, Asn-228, and Ser-271.

The protein belongs to the IspH family. It depends on [4Fe-4S] cluster as a cofactor.

It carries out the reaction isopentenyl diphosphate + 2 oxidized [2Fe-2S]-[ferredoxin] + H2O = (2E)-4-hydroxy-3-methylbut-2-enyl diphosphate + 2 reduced [2Fe-2S]-[ferredoxin] + 2 H(+). It catalyses the reaction dimethylallyl diphosphate + 2 oxidized [2Fe-2S]-[ferredoxin] + H2O = (2E)-4-hydroxy-3-methylbut-2-enyl diphosphate + 2 reduced [2Fe-2S]-[ferredoxin] + 2 H(+). The protein operates within isoprenoid biosynthesis; dimethylallyl diphosphate biosynthesis; dimethylallyl diphosphate from (2E)-4-hydroxy-3-methylbutenyl diphosphate: step 1/1. It participates in isoprenoid biosynthesis; isopentenyl diphosphate biosynthesis via DXP pathway; isopentenyl diphosphate from 1-deoxy-D-xylulose 5-phosphate: step 6/6. Catalyzes the conversion of 1-hydroxy-2-methyl-2-(E)-butenyl 4-diphosphate (HMBPP) into a mixture of isopentenyl diphosphate (IPP) and dimethylallyl diphosphate (DMAPP). Acts in the terminal step of the DOXP/MEP pathway for isoprenoid precursor biosynthesis. This is 4-hydroxy-3-methylbut-2-enyl diphosphate reductase from Brevibacillus brevis (strain 47 / JCM 6285 / NBRC 100599).